Consider the following 221-residue polypeptide: Eukaryotic translation initiation factor 3 subunit K (221 aa).

One can recognise a PCI domain in the interval 46 to 215; it reads YDLEANLACL…EKIEFDNLAP (170 aa).

This sequence belongs to the eIF-3 subunit K family. Component of the eukaryotic translation initiation factor 3 (eIF-3) complex.

It localises to the cytoplasm. Functionally, component of the eukaryotic translation initiation factor 3 (eIF-3) complex, which is involved in protein synthesis of a specialized repertoire of mRNAs and, together with other initiation factors, stimulates binding of mRNA and methionyl-tRNAi to the 40S ribosome. The eIF-3 complex specifically targets and initiates translation of a subset of mRNAs involved in cell proliferation. The polypeptide is Eukaryotic translation initiation factor 3 subunit K (Anopheles gambiae (African malaria mosquito)).